The chain runs to 311 residues: MARPQPCGPPHARCGSPSLPERPLQVKVVGLFSCPNFQIAKSAAENLKNNHPSKFEDPILVPLQEFAWHQYLQEKKRELKNETWEYSSSVISFVNGQFLGDALDLQKWAHEVWDIVDIKPSALYDALTEDFSAKFLRDTKHDFVFLDICIDSSPIGRLIFELYCDVCPKTCKNFQVLCTGKAGFSQRGIRLHYKNSIFHRIVQNGWIQGGDIVYGKGDNGESIYGPTFEDENFSVPHNKRGVLGMANKGRHSNGSQFYITLQATPYLDRKFVAFGQLIEGTEVLKQLELVPTQNERPIHMCRITDSGDPYA.

The region spanning 145–308 (FLDICIDSSP…HMCRITDSGD (164 aa)) is the PPIase cyclophilin-type domain.

This sequence belongs to the cyclophilin-type PPIase family.

In terms of biological role, probable inactive PPIase with no peptidyl-prolyl cis-trans isomerase activity. The sequence is that of Probable inactive peptidyl-prolyl cis-trans isomerase-like 6 from Homo sapiens (Human).